The chain runs to 258 residues: NAD kinase (258 aa).

The active-site Proton acceptor is the Asp-51. NAD(+) contacts are provided by residues Asp-51 to Gly-52, Arg-56, Asn-119 to Asp-120, Lys-130, Asp-149, Thr-160 to Ser-165, and Ala-184.

Belongs to the NAD kinase family. A divalent metal cation is required as a cofactor.

Its subcellular location is the cytoplasm. It catalyses the reaction NAD(+) + ATP = ADP + NADP(+) + H(+). In terms of biological role, involved in the regulation of the intracellular balance of NAD and NADP, and is a key enzyme in the biosynthesis of NADP. Catalyzes specifically the phosphorylation on 2'-hydroxyl of the adenosine moiety of NAD to yield NADP. The sequence is that of NAD kinase from Thermotoga neapolitana (strain ATCC 49049 / DSM 4359 / NBRC 107923 / NS-E).